The following is a 343-amino-acid chain: Endoglucanase C (343 aa).

The active-site Proton donor is the Glu140. Catalysis depends on Glu280, which acts as the Nucleophile.

It belongs to the glycosyl hydrolase 5 (cellulase A) family.

The enzyme catalyses Endohydrolysis of (1-&gt;4)-beta-D-glucosidic linkages in cellulose, lichenin and cereal beta-D-glucans.. The protein operates within glycan metabolism; cellulose degradation. In terms of biological role, this enzyme catalyzes the endohydrolysis of 1,4-beta-glucosidic linkages in cellulose, lichenin and cereal beta-D-glucans. The protein is Endoglucanase C (celC) of Acetivibrio thermocellus (Hungateiclostridium thermocellum).